Reading from the N-terminus, the 394-residue chain is Phosphoglycerate kinase (394 aa).

Substrate-binding positions include 21 to 23 (DLN), arginine 36, 59 to 62 (HLGR), arginine 113, and arginine 146. Residues lysine 197, glutamate 319, and 345–348 (GGDT) contribute to the ATP site.

This sequence belongs to the phosphoglycerate kinase family. In terms of assembly, monomer.

Its subcellular location is the cytoplasm. The catalysed reaction is (2R)-3-phosphoglycerate + ATP = (2R)-3-phospho-glyceroyl phosphate + ADP. It participates in carbohydrate degradation; glycolysis; pyruvate from D-glyceraldehyde 3-phosphate: step 2/5. The polypeptide is Phosphoglycerate kinase (Halorhodospira halophila (strain DSM 244 / SL1) (Ectothiorhodospira halophila (strain DSM 244 / SL1))).